Consider the following 1217-residue polypeptide: ATP-dependent RNA helicase DHX30 (1217 aa).

Residues Asp15 and Ser29 each carry the phosphoserine modification. A DRBM domain is found at 76-144; that stretch reads PKNLLNSVIG…QAAAAACQLF (69 aa). The interval 176 to 223 is disordered; the sequence is WWRPEPTMPPTSWRQLNPENIRPGGPAGLSRSLGREEEEDEEEELEEG. Acidic residues predominate over residues 211–223; the sequence is EEEEDEEEELEEG. 2 positions are modified to phosphoserine: Ser249 and Ser403. The 169-residue stretch at 467 to 635 folds into the Helicase ATP-binding domain; it reads LSAIEQHPVV…FGGCPVIKVP (169 aa). An ATP-binding site is contributed by 480–487; sequence GDTGCGKT. Residues 582 to 585 carry the DEAH box motif; that stretch reads DEVH. The Helicase C-terminal domain maps to 677-850; the sequence is LVTDLVLHID…NLVLQAKIHM (174 aa).

It belongs to the DEAD box helicase family. DEAH subfamily. In terms of assembly, identified in a complex with TFAM and SSBP1. Interacts (via N-terminus) with ZC3HAV1 (via N-terminal domain) in an RNA-independent manner. Found in a complex with GRSF1, DDX28, FASTKD2 and FASTKD5. In terms of processing, phosphorylated on Ser-15. As to expression, expressed in the heart, brain, spleen, lung, liver, skeletal muscle, kidney, and testis. Expression is strongest in the testis and brain, while the lowest levels of expression are found in the spleen and lung.

Its subcellular location is the cytoplasm. The protein resides in the mitochondrion. The protein localises to the mitochondrion matrix. It is found in the mitochondrion nucleoid. It carries out the reaction ATP + H2O = ADP + phosphate + H(+). Functionally, RNA-dependent helicase. Plays an important role in the assembly of the mitochondrial large ribosomal subunit. Required for optimal function of the zinc-finger antiviral protein ZC3HAV1. Associates with mitochondrial DNA. Involved in nervous system development and differentiation through its involvement in the up-regulation of a number of genes which are required for neurogenesis, including GSC, NCAM1, neurogenin, and NEUROD. In Mus musculus (Mouse), this protein is ATP-dependent RNA helicase DHX30 (Dhx30).